The sequence spans 407 residues: Phosphopentomutase (407 aa).

Residues Asp10, Asp306, His311, Asp347, His348, and His359 each coordinate Mn(2+).

This sequence belongs to the phosphopentomutase family. Requires Mn(2+) as cofactor.

Its subcellular location is the cytoplasm. It carries out the reaction 2-deoxy-alpha-D-ribose 1-phosphate = 2-deoxy-D-ribose 5-phosphate. The enzyme catalyses alpha-D-ribose 1-phosphate = D-ribose 5-phosphate. Its pathway is carbohydrate degradation; 2-deoxy-D-ribose 1-phosphate degradation; D-glyceraldehyde 3-phosphate and acetaldehyde from 2-deoxy-alpha-D-ribose 1-phosphate: step 1/2. Isomerase that catalyzes the conversion of deoxy-ribose 1-phosphate (dRib-1-P) and ribose 1-phosphate (Rib-1-P) to deoxy-ribose 5-phosphate (dRib-5-P) and ribose 5-phosphate (Rib-5-P), respectively. This Shigella dysenteriae serotype 1 (strain Sd197) protein is Phosphopentomutase.